A 173-amino-acid polypeptide reads, in one-letter code: Regulatory protein RecX (173 aa).

It belongs to the RecX family.

It localises to the cytoplasm. In terms of biological role, modulates RecA activity. In Mycobacterium marinum (strain ATCC BAA-535 / M), this protein is Regulatory protein RecX.